Here is a 210-residue protein sequence, read N- to C-terminus: Glutathione S-transferase mdpJ (210 aa).

The GST N-terminal domain occupies 2–83; it reads SFGTLYTHNP…YCNDERSSLR (82 aa). One can recognise a GST C-terminal domain in the interval 77-200; sequence DERSSLRILQ…VAGGVPDLGL (124 aa).

The protein belongs to the GST superfamily.

The protein operates within secondary metabolite biosynthesis. Its function is as follows. Glutathione S-transferase; part of the gene cluster that mediates the biosynthesis of monodictyphenone, a prenyl xanthone derivative. The pathway begins with the synthesis of atrochrysone thioester by the polyketide synthase (PKS) mdpG. The atrochrysone carboxyl ACP thioesterase mdpF then breaks the thioester bond and releases the atrochrysone carboxylic acid from mdpG. The atrochrysone carboxylic acid is then converted to atrochrysone which is further transformed into emodin anthrone. The next step is performed by the anthrone oxygenase mdpH that catalyzes the oxidation of emodinanthrone to emodin. Emodin is further modified to yield monodictyphenone via several steps involving mdpB, mdpC mdpJ, mdpK and mdpL. These enzymes with xptA, xptB and xptC are also proposed to be involved in the synthesis of shamixanthone from emodin. Especially, direct reduction of emodin by the short chain dehydrogenase mdpC followed by dehydration catalyzed by the scytalone dehydratase-like protein mdpB gives loss of oxygen and formation of chrysophanol intermediate in two simple steps. This chain is Glutathione S-transferase mdpJ, found in Emericella nidulans (strain FGSC A4 / ATCC 38163 / CBS 112.46 / NRRL 194 / M139) (Aspergillus nidulans).